The sequence spans 424 residues: Glutamate-1-semialdehyde 2,1-aminomutase (424 aa).

Residue Lys266 is modified to N6-(pyridoxal phosphate)lysine.

Belongs to the class-III pyridoxal-phosphate-dependent aminotransferase family. HemL subfamily. In terms of assembly, homodimer. It depends on pyridoxal 5'-phosphate as a cofactor.

The protein localises to the cytoplasm. The catalysed reaction is (S)-4-amino-5-oxopentanoate = 5-aminolevulinate. The protein operates within porphyrin-containing compound metabolism; protoporphyrin-IX biosynthesis; 5-aminolevulinate from L-glutamyl-tRNA(Glu): step 2/2. The protein is Glutamate-1-semialdehyde 2,1-aminomutase of Thermus thermophilus (strain ATCC 27634 / DSM 579 / HB8).